Consider the following 340-residue polypeptide: Phosphoribosylformylglycinamidine cyclo-ligase (340 aa).

This sequence belongs to the AIR synthase family.

It localises to the cytoplasm. The catalysed reaction is 2-formamido-N(1)-(5-O-phospho-beta-D-ribosyl)acetamidine + ATP = 5-amino-1-(5-phospho-beta-D-ribosyl)imidazole + ADP + phosphate + H(+). Its pathway is purine metabolism; IMP biosynthesis via de novo pathway; 5-amino-1-(5-phospho-D-ribosyl)imidazole from N(2)-formyl-N(1)-(5-phospho-D-ribosyl)glycinamide: step 2/2. The sequence is that of Phosphoribosylformylglycinamidine cyclo-ligase from Streptococcus agalactiae serotype Ia (strain ATCC 27591 / A909 / CDC SS700).